Reading from the N-terminus, the 325-residue chain is Undecaprenyl-phosphate 4-deoxy-4-formamido-L-arabinose transferase (325 aa).

Transmembrane regions (helical) follow at residues 236-256 (LSIF…LLIL) and 270-290 (VFTL…GMGL).

Belongs to the glycosyltransferase 2 family.

Its subcellular location is the cell inner membrane. The enzyme catalyses UDP-4-deoxy-4-formamido-beta-L-arabinose + di-trans,octa-cis-undecaprenyl phosphate = 4-deoxy-4-formamido-alpha-L-arabinopyranosyl di-trans,octa-cis-undecaprenyl phosphate + UDP. The protein operates within glycolipid biosynthesis; 4-amino-4-deoxy-alpha-L-arabinose undecaprenyl phosphate biosynthesis; 4-amino-4-deoxy-alpha-L-arabinose undecaprenyl phosphate from UDP-4-deoxy-4-formamido-beta-L-arabinose and undecaprenyl phosphate: step 1/2. It participates in bacterial outer membrane biogenesis; lipopolysaccharide biosynthesis. Catalyzes the transfer of 4-deoxy-4-formamido-L-arabinose from UDP to undecaprenyl phosphate. The modified arabinose is attached to lipid A and is required for resistance to polymyxin and cationic antimicrobial peptides. The polypeptide is Undecaprenyl-phosphate 4-deoxy-4-formamido-L-arabinose transferase (Edwardsiella ictaluri (strain 93-146)).